A 520-amino-acid polypeptide reads, in one-letter code: Bifunctional purine biosynthesis protein PurH (520 aa).

The 150-residue stretch at 1-150 (MSDDRKAIKR…KNHPSVAVVV (150 aa)) folds into the MGS-like domain.

It belongs to the PurH family.

It catalyses the reaction (6R)-10-formyltetrahydrofolate + 5-amino-1-(5-phospho-beta-D-ribosyl)imidazole-4-carboxamide = 5-formamido-1-(5-phospho-D-ribosyl)imidazole-4-carboxamide + (6S)-5,6,7,8-tetrahydrofolate. The catalysed reaction is IMP + H2O = 5-formamido-1-(5-phospho-D-ribosyl)imidazole-4-carboxamide. It functions in the pathway purine metabolism; IMP biosynthesis via de novo pathway; 5-formamido-1-(5-phospho-D-ribosyl)imidazole-4-carboxamide from 5-amino-1-(5-phospho-D-ribosyl)imidazole-4-carboxamide (10-formyl THF route): step 1/1. Its pathway is purine metabolism; IMP biosynthesis via de novo pathway; IMP from 5-formamido-1-(5-phospho-D-ribosyl)imidazole-4-carboxamide: step 1/1. In Corynebacterium glutamicum (strain ATCC 13032 / DSM 20300 / JCM 1318 / BCRC 11384 / CCUG 27702 / LMG 3730 / NBRC 12168 / NCIMB 10025 / NRRL B-2784 / 534), this protein is Bifunctional purine biosynthesis protein PurH.